Here is a 188-residue protein sequence, read N- to C-terminus: MKIYIIDNGGQWTHREWRTVRDLGVDSTIVPNTVDADVLADADGIILSGGPASIESEISKLGNIKEYMHRYNYPVLGICVGAQFIAIDSGGRVSKALHAEYGKKIVNFTSKDGIFYNIPDSINAWENHNDEIKSISDDYIICAYSDTCRVQAFYHKNRDIFGVQFHPEVNNTEHGTTIFKNFIEKCRR.

Residues 2 to 188 enclose the Glutamine amidotransferase type-1 domain; the sequence is KIYIIDNGGQ…FKNFIEKCRR (187 aa). The active-site Nucleophile is the C79. Catalysis depends on residues H166 and E168.

Heterodimer composed of a glutamine amidotransferase subunit (A) and a GMP-binding subunit (B).

The catalysed reaction is XMP + L-glutamine + ATP + H2O = GMP + L-glutamate + AMP + diphosphate + 2 H(+). Its pathway is purine metabolism; GMP biosynthesis; GMP from XMP (L-Gln route): step 1/1. In terms of biological role, catalyzes the synthesis of GMP from XMP. The sequence is that of GMP synthase [glutamine-hydrolyzing] subunit A from Picrophilus torridus (strain ATCC 700027 / DSM 9790 / JCM 10055 / NBRC 100828 / KAW 2/3).